Reading from the N-terminus, the 375-residue chain is Queuine tRNA-ribosyltransferase (375 aa).

The active-site Proton acceptor is Asp-89. Residues 89–93 (DSGGF), Asp-143, Gln-187, and Gly-214 contribute to the substrate site. Positions 245-251 (GVGKPED) are RNA binding. Asp-264 acts as the Nucleophile in catalysis. The segment at 269–273 (TRNAR) is RNA binding; important for wobble base 34 recognition. Zn(2+) contacts are provided by Cys-302, Cys-304, Cys-307, and His-333.

It belongs to the queuine tRNA-ribosyltransferase family. In terms of assembly, homodimer. Within each dimer, one monomer is responsible for RNA recognition and catalysis, while the other monomer binds to the replacement base PreQ1. Requires Zn(2+) as cofactor.

It carries out the reaction 7-aminomethyl-7-carbaguanine + guanosine(34) in tRNA = 7-aminomethyl-7-carbaguanosine(34) in tRNA + guanine. It functions in the pathway tRNA modification; tRNA-queuosine biosynthesis. Functionally, catalyzes the base-exchange of a guanine (G) residue with the queuine precursor 7-aminomethyl-7-deazaguanine (PreQ1) at position 34 (anticodon wobble position) in tRNAs with GU(N) anticodons (tRNA-Asp, -Asn, -His and -Tyr). Catalysis occurs through a double-displacement mechanism. The nucleophile active site attacks the C1' of nucleotide 34 to detach the guanine base from the RNA, forming a covalent enzyme-RNA intermediate. The proton acceptor active site deprotonates the incoming PreQ1, allowing a nucleophilic attack on the C1' of the ribose to form the product. After dissociation, two additional enzymatic reactions on the tRNA convert PreQ1 to queuine (Q), resulting in the hypermodified nucleoside queuosine (7-(((4,5-cis-dihydroxy-2-cyclopenten-1-yl)amino)methyl)-7-deazaguanosine). The polypeptide is Queuine tRNA-ribosyltransferase (Salmonella choleraesuis (strain SC-B67)).